We begin with the raw amino-acid sequence, 303 residues long: GTPase Era (303 aa).

Positions 7 to 174 constitute an Era-type G domain; the sequence is KSGFVAILGR…IDTLSEKLDE (168 aa). Residues 15–22 form a G1 region; that stretch reads GRPNVGKS. 15–22 contacts GTP; it reads GRPNVGKS. The interval 41-45 is G2; the sequence is QTTRN. The segment at 62 to 65 is G3; that stretch reads DTPG. GTP is bound by residues 62–66 and 124–127; these read DTPGI and NKID. The G4 stretch occupies residues 124 to 127; sequence NKID. Residues 153–155 form a G5 region; the sequence is ISA. Residues 205-283 enclose the KH type-2 domain; it reads TREEVPHSIA…YLETWVKIKN (79 aa).

It belongs to the TRAFAC class TrmE-Era-EngA-EngB-Septin-like GTPase superfamily. Era GTPase family. As to quaternary structure, monomer.

Its subcellular location is the cytoplasm. The protein localises to the cell membrane. An essential GTPase that binds both GDP and GTP, with rapid nucleotide exchange. Plays a role in 16S rRNA processing and 30S ribosomal subunit biogenesis and possibly also in cell cycle regulation and energy metabolism. This chain is GTPase Era, found in Lactococcus lactis subsp. lactis (strain IL1403) (Streptococcus lactis).